The primary structure comprises 249 residues: Probable proteasome subunit alpha type-2 (249 aa).

The protein belongs to the peptidase T1A family. As to quaternary structure, the 26S proteasome consists of a 20S proteasome core and two 19S regulatory subunits. The 20S proteasome core is composed of 28 subunits that are arranged in four stacked rings, resulting in a barrel-shaped structure. The two end rings are each formed by seven alpha subunits, and the two central rings are each formed by seven beta subunits. The catalytic chamber with the active sites is on the inside of the barrel.

It localises to the cytoplasm. The protein localises to the nucleus. The proteasome is a multicatalytic proteinase complex which is characterized by its ability to cleave peptides with Arg, Phe, Tyr, Leu, and Glu adjacent to the leaving group at neutral or slightly basic pH. The proteasome has an ATP-dependent proteolytic activity. The chain is Probable proteasome subunit alpha type-2 (pca-2) from Neurospora crassa (strain ATCC 24698 / 74-OR23-1A / CBS 708.71 / DSM 1257 / FGSC 987).